The sequence spans 517 residues: MDPLEALQKHVQRPEEFPLREVTVSGISYVAFGDYAYKKDTETSLQIYGKSDEFYSLESLVVFLKYSHENHGVYVKEAAAAGVRAVTRIDRKNVTEYLQGDRTDFPALMNQVNPLSLRQLLHSSEPEAKKPRLDGEAAGEPMDTSTSDEPQESAVSAAKKEVEIRALNDNLTKDRIAEMRRKRQSHREKGIVTIDESLSTLTSASLPKTRIHKTRENVMLGARDLSNVLDIITSAQRQWDLNEKKEKVAAVHATNLSKDQSGAAGGQQQRSGYSRYAQEAFAHEKTKEIQTEGSFIGSNFSSIKQGHHAVQKAPDAPPGRPPLAKPIQLLTSSTATSSGSSAAQNGSKRTSRSPIIIVPSAMNTMINLYNVRDILQNFSYVPVDQRRKETNKKPVDLAIQRQKNGVTYNIRVIDNAEKLANDDWDRVIAVFVMGVAWQFKGWKWNGNPTDIFTHIPAFHFHVDQDKPVAQVMQWNVHKIPVSATKRHMDKARFSQVWETIENFVRKNKPHLTARLGL.

Positions 124–135 are enriched in basic and acidic residues; the sequence is SEPEAKKPRLDG. Disordered stretches follow at residues 124–159 and 306–326; these read SEPE…SAAK and GHHA…LAKP. Residues 315–324 show a composition bias toward pro residues; the sequence is DAPPGRPPLA.

Belongs to the CDC73 family. In terms of assembly, component of the PAF1 complex which consists of at least cdc-73, ctr-9, leo-1, pafo-1 and rtfo-1.

The protein localises to the nucleus. Its function is as follows. Component of the PAF1 complex which is a multifunctional complex involved in transcription initiation via genetic interactions with TATA-binding proteins, elongation and transcription-coupled histone modification. This chain is Cell division cycle protein 73, found in Caenorhabditis elegans.